Here is a 123-residue protein sequence, read N- to C-terminus: Ribosome-binding factor A (123 aa).

The protein belongs to the RbfA family. Monomer. Binds 30S ribosomal subunits, but not 50S ribosomal subunits or 70S ribosomes.

It localises to the cytoplasm. In terms of biological role, one of several proteins that assist in the late maturation steps of the functional core of the 30S ribosomal subunit. Associates with free 30S ribosomal subunits (but not with 30S subunits that are part of 70S ribosomes or polysomes). Required for efficient processing of 16S rRNA. May interact with the 5'-terminal helix region of 16S rRNA. In Syntrophus aciditrophicus (strain SB), this protein is Ribosome-binding factor A.